A 308-amino-acid chain; its full sequence is Putative cathepsin L 3 (308 aa).

The first 21 residues, 1–21 (MKQFLTAAIVTLLMTAGYYHL), serve as a signal peptide directing secretion. A propeptide spans 22–110 (QEDDTNDFER…GASLPEVQLE (89 aa)) (activation peptide). Disulfide bonds link C129–C170 and C254–C298. Catalysis depends on residues H261 and N278.

This sequence belongs to the peptidase C1 family.

Its subcellular location is the secreted. It carries out the reaction Specificity close to that of papain. As compared to cathepsin B, cathepsin L exhibits higher activity toward protein substrates, but has little activity on Z-Arg-Arg-NHMec, and no peptidyl-dipeptidase activity.. May be involved in extracellular digestion. This Paramecium tetraurelia protein is Putative cathepsin L 3.